Reading from the N-terminus, the 216-residue chain is uncharacterized protein (216 aa).

Helical transmembrane passes span 12–32, 48–68, 74–94, 134–154, 156–176, and 191–211; these read YVLG…FVLA, GVFL…ASLL, LFIG…VGML, ILFF…YPGL, FLVL…FLIF, and LAAG…VKLA.

This sequence belongs to the Rht family.

It localises to the cell membrane. This is an uncharacterized protein from Pseudomonas aeruginosa (strain ATCC 15692 / DSM 22644 / CIP 104116 / JCM 14847 / LMG 12228 / 1C / PRS 101 / PAO1).